Consider the following 338-residue polypeptide: Tetraacyldisaccharide 4'-kinase (338 aa).

67-74 (IAGGAGKT) serves as a coordination point for ATP.

Belongs to the LpxK family.

It carries out the reaction a lipid A disaccharide + ATP = a lipid IVA + ADP + H(+). The protein operates within glycolipid biosynthesis; lipid IV(A) biosynthesis; lipid IV(A) from (3R)-3-hydroxytetradecanoyl-[acyl-carrier-protein] and UDP-N-acetyl-alpha-D-glucosamine: step 6/6. In terms of biological role, transfers the gamma-phosphate of ATP to the 4'-position of a tetraacyldisaccharide 1-phosphate intermediate (termed DS-1-P) to form tetraacyldisaccharide 1,4'-bis-phosphate (lipid IVA). The polypeptide is Tetraacyldisaccharide 4'-kinase (Acidovorax sp. (strain JS42)).